The sequence spans 153 residues: Endoribonuclease YbeY (153 aa).

Zn(2+) is bound by residues His116, His120, and His126.

It belongs to the endoribonuclease YbeY family. Zn(2+) serves as cofactor.

The protein localises to the cytoplasm. In terms of biological role, single strand-specific metallo-endoribonuclease involved in late-stage 70S ribosome quality control and in maturation of the 3' terminus of the 16S rRNA. The sequence is that of Endoribonuclease YbeY from Paraburkholderia phytofirmans (strain DSM 17436 / LMG 22146 / PsJN) (Burkholderia phytofirmans).